Consider the following 160-residue polypeptide: Transcriptional repressor NrdR (160 aa).

The span at 1–11 shows a compositional bias: polar residues; it reads MRCPSCNSLDT. Residues 1–20 form a disordered region; sequence MRCPSCNSLDTQVKDSRPTE. Residues 3–34 fold into a zinc finger; sequence CPSCNSLDTQVKDSRPTEDSAVIRRRRVCMAC. The ATP-cone domain maps to 49 to 139; it reads LTVIKRNGRR…VYRNFREAKD (91 aa).

Belongs to the NrdR family. Zn(2+) serves as cofactor.

Negatively regulates transcription of bacterial ribonucleotide reductase nrd genes and operons by binding to NrdR-boxes. This Nitrobacter hamburgensis (strain DSM 10229 / NCIMB 13809 / X14) protein is Transcriptional repressor NrdR.